The sequence spans 392 residues: Lipid-A-disaccharide synthase (392 aa).

It belongs to the LpxB family.

The enzyme catalyses a lipid X + a UDP-2-N,3-O-bis[(3R)-3-hydroxyacyl]-alpha-D-glucosamine = a lipid A disaccharide + UDP + H(+). The protein operates within bacterial outer membrane biogenesis; LPS lipid A biosynthesis. Condensation of UDP-2,3-diacylglucosamine and 2,3-diacylglucosamine-1-phosphate to form lipid A disaccharide, a precursor of lipid A, a phosphorylated glycolipid that anchors the lipopolysaccharide to the outer membrane of the cell. The chain is Lipid-A-disaccharide synthase from Bradyrhizobium diazoefficiens (strain JCM 10833 / BCRC 13528 / IAM 13628 / NBRC 14792 / USDA 110).